Here is a 127-residue protein sequence, read N- to C-terminus: Small ribosomal subunit protein uS11 (127 aa).

The protein belongs to the universal ribosomal protein uS11 family. Part of the 30S ribosomal subunit. Interacts with proteins S7 and S18. Binds to IF-3.

In terms of biological role, located on the platform of the 30S subunit, it bridges several disparate RNA helices of the 16S rRNA. Forms part of the Shine-Dalgarno cleft in the 70S ribosome. The chain is Small ribosomal subunit protein uS11 from Rickettsia canadensis (strain McKiel).